Reading from the N-terminus, the 116-residue chain is Ribosome-binding factor A (116 aa).

Belongs to the RbfA family. Monomer. Binds 30S ribosomal subunits, but not 50S ribosomal subunits or 70S ribosomes.

The protein localises to the cytoplasm. One of several proteins that assist in the late maturation steps of the functional core of the 30S ribosomal subunit. Associates with free 30S ribosomal subunits (but not with 30S subunits that are part of 70S ribosomes or polysomes). Required for efficient processing of 16S rRNA. May interact with the 5'-terminal helix region of 16S rRNA. This chain is Ribosome-binding factor A, found in Clostridium botulinum (strain Alaska E43 / Type E3).